The sequence spans 309 residues: Mitochondrial phosphate carrier protein 1, mitochondrial (309 aa).

At 1–15 the chain is on the mitochondrial intermembrane side; the sequence is MTRVKSKLDEELSSP. The helical transmembrane segment at 16–36 threads the bilayer; it reads WFYTVCTMGGMLSAGTTHLAI. Solcar repeat units follow at residues 16–100, 109–193, and 210–289; these read WFYT…FKTL, NRTS…SVEF, and QQLG…IKVL. Over 37–74 the chain is Mitochondrial matrix; sequence TPLDVLKVNMQVNPVKYNSIPSGFSTLLREHGHSYLWR. The helical transmembrane segment at 75–94 threads the bilayer; that stretch reads GWSGKLLGYGVQGGCRFGLY. Residues 95–111 are Mitochondrial intermembrane-facing; it reads EYFKTLYSDVLPNHNRT. The helical transmembrane segment at 112–132 threads the bilayer; the sequence is SIYFLSSASAQIFADMALCPF. Residues 133–167 lie on the Mitochondrial matrix side of the membrane; sequence EAIKVRVQTQPMFAKGLLDGFPRVYRSEGLAGFHR. The helical transmembrane segment at 168–187 threads the bilayer; it reads GLFPLWCRNLPFSMVMFSTF. The Mitochondrial intermembrane segment spans residues 188–208; it reads EQSVEFIYQKIIQKRKQDCSK. A helical membrane pass occupies residues 209-229; sequence AQQLGVTCLAGYTAGAVGTII. The Mitochondrial matrix portion of the chain corresponds to 230–268; it reads SNPADVVLSSLYNNKAKNVLQAVRNIGFVGLFTRSLPVR. A helical membrane pass occupies residues 269–289; that stretch reads ITIVGPVITLQWFFYDAIKVL. Topologically, residues 290–309 are mitochondrial intermembrane; sequence SGFPTSGGVKKPVDAAKLSV.

The protein belongs to the mitochondrial carrier (TC 2.A.29) family. Expressed in stems, leaves and flowers. Strong expression in the stamens of flowers.

The protein localises to the mitochondrion inner membrane. Transport of phosphate groups from the cytosol to the mitochondrial matrix. Mediates salt stress tolerance through an ATP-dependent pathway and via modulation of the gibberellin metabolism. The polypeptide is Mitochondrial phosphate carrier protein 1, mitochondrial (MPT1) (Arabidopsis thaliana (Mouse-ear cress)).